Here is a 2298-residue protein sequence, read N- to C-terminus: Protein Ycf2 (2298 aa).

Glycine 1640–serine 1647 is a binding site for ATP.

Belongs to the Ycf2 family.

The protein resides in the plastid. It localises to the chloroplast stroma. In terms of biological role, probable ATPase of unknown function. Its presence in a non-photosynthetic plant (Epifagus virginiana) and experiments in tobacco indicate that it has an essential function which is probably not related to photosynthesis. This is Protein Ycf2 from Carica papaya (Papaya).